A 645-amino-acid chain; its full sequence is Rab11 family-interacting protein 1 (645 aa).

Positions Met-1–Tyr-128 constitute a C2 domain. The span at Pro-171–Ala-187 shows a compositional bias: basic and acidic residues. Residues Pro-171–Lys-215 are disordered. Residues Ser-186, Ser-204, Ser-208, and Ser-236 each carry the phosphoserine modification. The interval Trp-259–Lys-296 is disordered. Over residues Ser-282–Ser-293 the composition is skewed to polar residues. Ser-301, Ser-316, Ser-340, Ser-342, Ser-344, Ser-346, Ser-357, Ser-358, and Ser-383 each carry phosphoserine. The segment at Pro-330–Asn-545 is disordered. 2 stretches are compositionally biased toward basic and acidic residues: residues Ser-378–Met-391 and Ala-418–Lys-432. Ser-434 bears the Phosphoserine mark. The span at Ser-459 to Ala-487 shows a compositional bias: basic and acidic residues. Positions Lys-573–Pro-635 constitute an FIP-RBD domain. A necessary for interaction with RAB4A and RAB11A, subcellular location and endosomal recycling region spans residues Ala-581–Met-645.

As to quaternary structure, homooligomer. Interacts with RAB11A, RAB11B, RAB25, RAB4A and RAB14.

The protein localises to the recycling endosome. Its subcellular location is the cytoplasmic vesicle. Its function is as follows. A Rab11 effector protein involved in the endosomal recycling process. Also involved in controlling membrane trafficking along the phagocytic pathway and in phagocytosis. Interaction with RAB14 may function in the process of neurite formation. This chain is Rab11 family-interacting protein 1 (Rab11fip1), found in Mus musculus (Mouse).